The following is a 431-amino-acid chain: MKRFFENLFSQTERSVLNTGKKVGAGIAAGEWKNTEWGYPIATQEVIFLAKVFQPQHVKRHPYHIVRGTIAPLAVTLPLAFFVLNYFGVISSKIGFVIALSSFIGGLTIWAISIVFDSLYDQQHTYEVKRGLVMGMMMFIISEIMFFFSFFWSYFYISLSPNIAIGCVWPPYGLTVYSYMGLPLLNTVLLLLSGAILTDGYTILTEQKAVHENNEKVIAVEEAFTNLMNLYTKKQSINTLTFVDERREKFFAKNDQNAEKKEIAISAGVKELRDLDWDLYFFENPQNMEPNYKAPTDLSVIEYALITIFLKKRNKVIKTRLYFTLVCAVVFLFCQGYEYYFAPFSMNDGIYGSLFFLLTGFHGFHVLVGSILIGIITIRFIVGNFDLLNVGTKFQIFKNKSTGFACTLFYWHFVDIVWIFLYIVIYWWGSR.

7 helical membrane passes run 70-90, 96-116, 132-152, 176-196, 321-341, 356-376, and 408-428; these read IAPLAVTLPLAFFVLNYFGVI, FVIALSSFIGGLTIWAISIVF, LVMGMMMFIISEIMFFFSFFW, VYSYMGLPLLNTVLLLLSGAI, LYFTLVCAVVFLFCQGYEYYF, FLLTGFHGFHVLVGSILIGII, and LFYWHFVDIVWIFLYIVIYWW.

It belongs to the cytochrome c oxidase subunit 3 family. As to quaternary structure, component of the cytochrome c oxidase (complex IV, CIV), a multisubunit enzyme composed of a catalytic core of 3 subunits and several supernumerary subunits. The complex exists as a monomer or a dimer and forms supercomplexes (SCs) in the inner mitochondrial membrane with ubiquinol-cytochrome c oxidoreductase (cytochrome b-c1 complex, complex III, CIII).

It localises to the mitochondrion inner membrane. It carries out the reaction 4 Fe(II)-[cytochrome c] + O2 + 8 H(+)(in) = 4 Fe(III)-[cytochrome c] + 2 H2O + 4 H(+)(out). In terms of biological role, component of the cytochrome c oxidase, the last enzyme in the mitochondrial electron transport chain which drives oxidative phosphorylation. The respiratory chain contains 3 multisubunit complexes succinate dehydrogenase (complex II, CII), ubiquinol-cytochrome c oxidoreductase (cytochrome b-c1 complex, complex III, CIII) and cytochrome c oxidase (complex IV, CIV), that cooperate to transfer electrons derived from NADH and succinate to molecular oxygen, creating an electrochemical gradient over the inner membrane that drives transmembrane transport and the ATP synthase. Cytochrome c oxidase is the component of the respiratory chain that catalyzes the reduction of oxygen to water. Electrons originating from reduced cytochrome c in the intermembrane space (IMS) are transferred via the dinuclear copper A center (CU(A)) of subunit 2 and heme A of subunit 1 to the active site in subunit 1, a binuclear center (BNC) formed by heme A3 and copper B (CU(B)). The BNC reduces molecular oxygen to 2 water molecules using 4 electrons from cytochrome c in the IMS and 4 protons from the mitochondrial matrix. The protein is Cytochrome c oxidase subunit 3 (cox3) of Dictyostelium citrinum (Slime mold).